The primary structure comprises 230 residues: Heptaprenylglyceryl phosphate synthase (230 aa).

Lysine 12 contacts sn-glycerol 1-phosphate. Positions 14 and 40 each coordinate Mg(2+). Sn-glycerol 1-phosphate contacts are provided by residues 159-164 (YIEYSG), glycine 189, and 209-210 (GD).

Belongs to the GGGP/HepGP synthase family. Group I subfamily. Homodimer. Mg(2+) is required as a cofactor.

It carries out the reaction sn-glycerol 1-phosphate + all-trans-heptaprenyl diphosphate = 3-heptaprenyl-sn-glycero-1-phosphate + diphosphate. The protein operates within membrane lipid metabolism; glycerophospholipid metabolism. Its function is as follows. Prenyltransferase that catalyzes in vivo the transfer of the heptaprenyl moiety of heptaprenyl pyrophosphate (HepPP; 35 carbon atoms) to the C3 hydroxyl of sn-glycerol-1-phosphate (G1P), producing heptaprenylglyceryl phosphate (HepGP). This reaction is an ether-bond-formation step in the biosynthesis of archaea-type G1P-based membrane lipids found in Bacillales. The protein is Heptaprenylglyceryl phosphate synthase of Staphylococcus aureus (strain MRSA252).